A 158-amino-acid polypeptide reads, in one-letter code: Low molecular weight phosphotyrosine protein phosphatase (158 aa).

Ala-2 is subject to N-acetylalanine. Catalysis depends on Cys-13, which acts as the Nucleophile. Arg-19 is a catalytic residue. Asp-130 acts as the Proton donor in catalysis. 2 positions are modified to phosphotyrosine: Tyr-132 and Tyr-133.

This sequence belongs to the low molecular weight phosphotyrosine protein phosphatase family. As to quaternary structure, interacts with EPHA2; dephosphorylates EPHA2. Interacts with EPHB1. Interacts with the SH3 domain of SPTAN1. There is no interaction observed for isoform 2. In terms of processing, phosphorylated by LCK. Phosphorylation at Tyr-132 increases its phosphatase activity.

The protein resides in the cytoplasm. The enzyme catalyses O-phospho-L-tyrosyl-[protein] + H2O = L-tyrosyl-[protein] + phosphate. It catalyses the reaction a phosphate monoester + H2O = an alcohol + phosphate. Its activity is regulated as follows. Inhibited by sulfhydryl reagents. Its function is as follows. Acts on tyrosine phosphorylated proteins, low-MW aryl phosphates and natural and synthetic acyl phosphates with differences in substrate specificity between isoform 1 and isoform 2. This chain is Low molecular weight phosphotyrosine protein phosphatase, found in Rattus norvegicus (Rat).